A 517-amino-acid polypeptide reads, in one-letter code: Putative transporter C543.05c (517 aa).

Helical transmembrane passes span 68 to 88, 93 to 113, 121 to 141, 155 to 175, 186 to 206, 217 to 237, 269 to 289, 311 to 331, 377 to 397, 403 to 423, and 449 to 471; these read SFGV…FALL, LCIV…YDIM, FPFL…IAIA, CEIF…QVLC, FLSI…DTVG, ILLL…FQHI, IPVG…ILFY, GFHW…ILGI, SNFI…LLVL, CVLA…NGIT, and RVVW…ITQV.

Belongs to the anion exchanger (TC 2.A.31) family.

It is found in the vacuole membrane. This is Putative transporter C543.05c from Schizosaccharomyces pombe (strain 972 / ATCC 24843) (Fission yeast).